The sequence spans 499 residues: Lysine--tRNA ligase (499 aa).

E408 and E415 together coordinate Mg(2+).

Belongs to the class-II aminoacyl-tRNA synthetase family. As to quaternary structure, homodimer. Requires Mg(2+) as cofactor.

It is found in the cytoplasm. The catalysed reaction is tRNA(Lys) + L-lysine + ATP = L-lysyl-tRNA(Lys) + AMP + diphosphate. The polypeptide is Lysine--tRNA ligase (Bacillus cereus (strain AH820)).